Here is an 87-residue protein sequence, read N- to C-terminus: Small ribosomal subunit protein bS20 (87 aa).

The disordered stretch occupies residues 1–22; it reads MANHKSALKRHKQSLKRAARNR.

The protein belongs to the bacterial ribosomal protein bS20 family.

Binds directly to 16S ribosomal RNA. In Nitratidesulfovibrio vulgaris (strain DP4) (Desulfovibrio vulgaris), this protein is Small ribosomal subunit protein bS20.